Consider the following 691-residue polypeptide: Threonine--tRNA ligase (691 aa).

The segment at 1 to 22 is disordered; sequence MSVPAQPAPGADGGDPRQPIRV. The TGS domain maps to 1–73; the sequence is MSVPAQPAPG…DADAEVTPIA (73 aa). The catalytic stretch occupies residues 268–574; the sequence is DHRKLGVELD…LTEHYAGAFP (307 aa). Positions 373, 424, and 551 each coordinate Zn(2+).

The protein belongs to the class-II aminoacyl-tRNA synthetase family. In terms of assembly, homodimer. It depends on Zn(2+) as a cofactor.

The protein localises to the cytoplasm. The catalysed reaction is tRNA(Thr) + L-threonine + ATP = L-threonyl-tRNA(Thr) + AMP + diphosphate + H(+). Its function is as follows. Catalyzes the attachment of threonine to tRNA(Thr) in a two-step reaction: L-threonine is first activated by ATP to form Thr-AMP and then transferred to the acceptor end of tRNA(Thr). Also edits incorrectly charged L-seryl-tRNA(Thr). The protein is Threonine--tRNA ligase of Mycobacterium ulcerans (strain Agy99).